Reading from the N-terminus, the 360-residue chain is Peptide chain release factor 1 (360 aa).

Gln-237 carries the N5-methylglutamine modification.

The protein belongs to the prokaryotic/mitochondrial release factor family. Post-translationally, methylated by PrmC. Methylation increases the termination efficiency of RF1.

The protein localises to the cytoplasm. Peptide chain release factor 1 directs the termination of translation in response to the peptide chain termination codons UAG and UAA. The chain is Peptide chain release factor 1 from Pseudomonas aeruginosa (strain LESB58).